A 196-amino-acid chain; its full sequence is Imidazoleglycerol-phosphate dehydratase (196 aa).

The protein belongs to the imidazoleglycerol-phosphate dehydratase family.

The protein localises to the cytoplasm. It carries out the reaction D-erythro-1-(imidazol-4-yl)glycerol 3-phosphate = 3-(imidazol-4-yl)-2-oxopropyl phosphate + H2O. Its pathway is amino-acid biosynthesis; L-histidine biosynthesis; L-histidine from 5-phospho-alpha-D-ribose 1-diphosphate: step 6/9. In Chlorobium chlorochromatii (strain CaD3), this protein is Imidazoleglycerol-phosphate dehydratase.